A 90-amino-acid polypeptide reads, in one-letter code: UPF0335 protein R02793 (90 aa).

Belongs to the UPF0335 family.

The polypeptide is UPF0335 protein R02793 (Rhizobium meliloti (strain 1021) (Ensifer meliloti)).